We begin with the raw amino-acid sequence, 284 residues long: Undecaprenyl-diphosphatase 2 (284 aa).

The next 7 membrane-spanning stretches (helical) occupy residues 6–26, 46–66, 94–114, 119–139, 183–203, 227–247, and 262–282; these read VIFILKSVIIAIVEGLTEFIP, FAEMFEVVIQLGAILAVVVLY, FGMNVIIGCIPFAIIGVLFYD, LFNLQSVIIGFIVGGILLLVV, IMGGWIAGLNSPTAAEFSFFL, TLWIALVVGFIVAFIVSIIVM, and FAVYRIIMGVVLAVLAFTNII.

The protein belongs to the UppP family.

Its subcellular location is the cell membrane. It catalyses the reaction di-trans,octa-cis-undecaprenyl diphosphate + H2O = di-trans,octa-cis-undecaprenyl phosphate + phosphate + H(+). Catalyzes the dephosphorylation of undecaprenyl diphosphate (UPP). Confers resistance to bacitracin. The sequence is that of Undecaprenyl-diphosphatase 2 from Clostridioides difficile (strain 630) (Peptoclostridium difficile).